The following is a 155-amino-acid chain: 6,7-dimethyl-8-ribityllumazine synthase (155 aa).

5-amino-6-(D-ribitylamino)uracil is bound by residues Phe24, Ala58 to Glu60, and Ala82 to Ile84. Position 87 to 88 (Ser87 to Thr88) interacts with (2S)-2-hydroxy-3-oxobutyl phosphate. His90 (proton donor) is an active-site residue. Phe115 is a binding site for 5-amino-6-(D-ribitylamino)uracil. A (2S)-2-hydroxy-3-oxobutyl phosphate-binding site is contributed by Arg129.

This sequence belongs to the DMRL synthase family.

It catalyses the reaction (2S)-2-hydroxy-3-oxobutyl phosphate + 5-amino-6-(D-ribitylamino)uracil = 6,7-dimethyl-8-(1-D-ribityl)lumazine + phosphate + 2 H2O + H(+). Its pathway is cofactor biosynthesis; riboflavin biosynthesis; riboflavin from 2-hydroxy-3-oxobutyl phosphate and 5-amino-6-(D-ribitylamino)uracil: step 1/2. Its function is as follows. Catalyzes the formation of 6,7-dimethyl-8-ribityllumazine by condensation of 5-amino-6-(D-ribitylamino)uracil with 3,4-dihydroxy-2-butanone 4-phosphate. This is the penultimate step in the biosynthesis of riboflavin. In Chlorobium luteolum (strain DSM 273 / BCRC 81028 / 2530) (Pelodictyon luteolum), this protein is 6,7-dimethyl-8-ribityllumazine synthase.